We begin with the raw amino-acid sequence, 248 residues long: Tabserin (248 aa).

The N-terminal stretch at 1–19 is a signal peptide; it reads MLKYSALFLYLIYVGGSES. The Peptidase S1 domain maps to 24–248; it reads IVGGVPVAEE…PYFENGLRKR (225 aa). C49 and C65 form a disulfide bridge. Residues H64 and D111 each act as charge relay system in the active site. 2 disulfide bridges follow: C175–C189 and C201–C226. S205 serves as the catalytic Charge relay system.

This sequence belongs to the peptidase S1 family. In terms of tissue distribution, expressed in salivary glands.

It localises to the secreted. Serine protease that inhibits blood coagulation in a dose-dependent manner. May act by destroying coagulant factors to inhibit blood coagulation. The chain is Tabserin from Tabanus yao (Horsefly).